Here is a 91-residue protein sequence, read N- to C-terminus: Small ribosomal subunit protein uS17 (91 aa).

Belongs to the universal ribosomal protein uS17 family. In terms of assembly, part of the 30S ribosomal subunit.

One of the primary rRNA binding proteins, it binds specifically to the 5'-end of 16S ribosomal RNA. This chain is Small ribosomal subunit protein uS17, found in Salinispora arenicola (strain CNS-205).